The following is a 412-amino-acid chain: Phosphoglycerate kinase (412 aa).

Substrate contacts are provided by residues Asp-24–Asn-26, Arg-44, His-67–Arg-70, Arg-126, and Arg-170. ATP is bound by residues Lys-220, Gly-308, Glu-339, and Gly-368–Ser-371.

This sequence belongs to the phosphoglycerate kinase family. As to quaternary structure, monomer.

It is found in the cytoplasm. The enzyme catalyses (2R)-3-phosphoglycerate + ATP = (2R)-3-phospho-glyceroyl phosphate + ADP. The protein operates within carbohydrate degradation; glycolysis; pyruvate from D-glyceraldehyde 3-phosphate: step 2/5. The sequence is that of Phosphoglycerate kinase from Mycobacteroides abscessus (strain ATCC 19977 / DSM 44196 / CCUG 20993 / CIP 104536 / JCM 13569 / NCTC 13031 / TMC 1543 / L948) (Mycobacterium abscessus).